We begin with the raw amino-acid sequence, 346 residues long: Selenide, water dikinase (346 aa).

The active site involves Sec-16. Position 16 (Sec-16) is a non-standard amino acid, selenocysteine. ATP contacts are provided by residues Lys-19 and Thr-47–Asp-49. Residue Asp-50 participates in Mg(2+) binding. Residues Asp-67, Asp-90, and Gly-138 to Ser-140 contribute to the ATP site. Asp-90 is a Mg(2+) binding site. Residue Asp-226 participates in Mg(2+) binding.

It belongs to the selenophosphate synthase 1 family. Class I subfamily. Homodimer. Mg(2+) is required as a cofactor.

It catalyses the reaction hydrogenselenide + ATP + H2O = selenophosphate + AMP + phosphate + 2 H(+). Synthesizes selenophosphate from selenide and ATP. The protein is Selenide, water dikinase of Haemophilus influenzae (strain ATCC 51907 / DSM 11121 / KW20 / Rd).